Here is a 452-residue protein sequence, read N- to C-terminus: Sesamin methylene transferase (452 aa).

This sequence belongs to the GcvT family. In terms of assembly, homotrimer.

It catalyses the reaction (+)-sesamin + (6S)-5,6,7,8-tetrahydrofolyl-(gamma-L-Glu)(n) = (+)-sesamin monocatechol + (6R)-5,10-methylenetetrahydrofolyl-(gamma-L-Glu)(n). It carries out the reaction (+)-sesamin monocatechol + (6S)-5,6,7,8-tetrahydrofolyl-(gamma-L-Glu)(n) = (+)-sesamin dicatechol + (6R)-5,10-methylenetetrahydrofolyl-(gamma-L-Glu)(n). Converts sesamin into sesamin mono- and di-catechol. Catalyzes a ring cleavage to transfer the methylene group to tetrahydrofolate (THF). Also active with (+)-episesamin, (-)-asarinin, sesaminol, (+)-sesamolin and piperine. In Sinomonas sp. (strain No.22), this protein is Sesamin methylene transferase.